A 67-amino-acid polypeptide reads, in one-letter code: Probable Sec-independent protein translocase protein TatE (67 aa).

The helical transmembrane segment at 4-21 (ISITKLLVVAALVVLLFG) threads the bilayer. Positions 46-67 (EDAGAKKEAGGDIQAEKLSHKE) are disordered.

Belongs to the TatA/E family. TatE subfamily.

Its subcellular location is the cell inner membrane. In terms of biological role, part of the twin-arginine translocation (Tat) system that transports large folded proteins containing a characteristic twin-arginine motif in their signal peptide across membranes. TatE shares overlapping functions with TatA. In Citrobacter koseri (strain ATCC BAA-895 / CDC 4225-83 / SGSC4696), this protein is Probable Sec-independent protein translocase protein TatE.